The sequence spans 116 residues: Putative iron-sulfur cluster insertion protein ErpA (116 aa).

Positions 44, 108, and 110 each coordinate iron-sulfur cluster.

The protein belongs to the HesB/IscA family. Homodimer. Iron-sulfur cluster is required as a cofactor.

In terms of biological role, required for insertion of 4Fe-4S clusters. This chain is Putative iron-sulfur cluster insertion protein ErpA, found in Azoarcus sp. (strain BH72).